We begin with the raw amino-acid sequence, 482 residues long: Solute carrier family 49 member A3 (482 aa).

12 helical membrane passes run tryptophan 41–phenylalanine 61, tyrosine 81–isoleucine 101, alanine 109–valine 129, leucine 150–phenylalanine 170, isoleucine 181–valine 201, tyrosine 206–threonine 226, valine 264–leucine 284, leucine 296–cysteine 316, valine 330–phenylalanine 350, valine 355–glycine 375, serine 390–phenylalanine 410, and threonine 437–phenylalanine 457.

This sequence belongs to the major facilitator superfamily.

It is found in the membrane. The protein is Solute carrier family 49 member A3 (slc49a3) of Xenopus tropicalis (Western clawed frog).